Here is a 467-residue protein sequence, read N- to C-terminus: MRRYSALPGGGARPDTLADRLHRYRGVLLVILAPLALVSLVLLLMPRSPASSSAAAGRRWGPLDANKYAVIFDAGSSGSRVHVFRFDANLDLLHIGDQIELFVQKKPGLSEYANNPQEAAKSLVSLLEDAKRVVPVELRGQTPVRVGATAGLRALGAEKSEEILQAVRDLLREKSSFKTQPDWVTVLDGPQEGAYEWVTINYLLGKLGKTYADTVGVVDLGGGSVQMAYAIAEKDAVKAPKPSEGEDSYVKKLFLKGTTYYLYVHSYLHYGLLAARAEILKAGNGKGYSYCTLEGHQGQYKYGNGKFEASASPSGASYSKCRDDVVKALKVDQACTHMKCSFGGIWNGGGGAGQKNLFVASFFFDRAAEAGFVNPKAPVAKVKPSDFEKAAKRACKLNLKDAEAAYPGVQKDNIPYICMDLVYQYTLLVDGFGVGSHQEMTLVKKVPYSNAFVEAAWPLGSAIEVAS.

Topologically, residues 1-25 are cytoplasmic; that stretch reads MRRYSALPGGGARPDTLADRLHRYR. A helical; Signal-anchor for type II membrane protein membrane pass occupies residues 26–46; sequence GVLLVILAPLALVSLVLLLMP. Over 47 to 467 the chain is Extracellular; the sequence is RSPASSSAAA…PLGSAIEVAS (421 aa). 70–80 lines the ATP pocket; the sequence is VIFDAGSSGSR. Glutamate 192 acts as the Proton acceptor in catalysis. 216–226 is a binding site for ATP; the sequence is GVVDLGGGSVQ.

It belongs to the GDA1/CD39 NTPase family. Ca(2+) is required as a cofactor.

It is found in the membrane. The enzyme catalyses a ribonucleoside 5'-triphosphate + 2 H2O = a ribonucleoside 5'-phosphate + 2 phosphate + 2 H(+). Its function is as follows. Catalyzes the hydrolysis of phosphoanhydride bonds of nucleoside tri- and di-phosphates. This chain is Probable apyrase 2 (APY2), found in Oryza sativa subsp. japonica (Rice).